The chain runs to 75 residues: UPF0352 protein VF_1649 (75 aa).

It belongs to the UPF0352 family.

This is UPF0352 protein VF_1649 from Aliivibrio fischeri (strain ATCC 700601 / ES114) (Vibrio fischeri).